A 152-amino-acid chain; its full sequence is D-aminoacyl-tRNA deacylase (152 aa).

The short motif at 142-143 (GP) is the Gly-cisPro motif, important for rejection of L-amino acids element.

This sequence belongs to the DTD family. In terms of assembly, homodimer.

The protein resides in the cytoplasm. It carries out the reaction glycyl-tRNA(Ala) + H2O = tRNA(Ala) + glycine + H(+). The catalysed reaction is a D-aminoacyl-tRNA + H2O = a tRNA + a D-alpha-amino acid + H(+). An aminoacyl-tRNA editing enzyme that deacylates mischarged D-aminoacyl-tRNAs. Also deacylates mischarged glycyl-tRNA(Ala), protecting cells against glycine mischarging by AlaRS. Acts via tRNA-based rather than protein-based catalysis; rejects L-amino acids rather than detecting D-amino acids in the active site. By recycling D-aminoacyl-tRNA to D-amino acids and free tRNA molecules, this enzyme counteracts the toxicity associated with the formation of D-aminoacyl-tRNA entities in vivo and helps enforce protein L-homochirality. The polypeptide is D-aminoacyl-tRNA deacylase (Burkholderia cenocepacia (strain ATCC BAA-245 / DSM 16553 / LMG 16656 / NCTC 13227 / J2315 / CF5610) (Burkholderia cepacia (strain J2315))).